The following is a 159-amino-acid chain: Protein-export protein SecB (159 aa).

It belongs to the SecB family. As to quaternary structure, homotetramer, a dimer of dimers. One homotetramer interacts with 1 SecA dimer.

The protein localises to the cytoplasm. In terms of biological role, one of the proteins required for the normal export of preproteins out of the cell cytoplasm. It is a molecular chaperone that binds to a subset of precursor proteins, maintaining them in a translocation-competent state. It also specifically binds to its receptor SecA. This chain is Protein-export protein SecB, found in Hahella chejuensis (strain KCTC 2396).